Here is a 205-residue protein sequence, read N- to C-terminus: Small ribosomal subunit protein uS4 (205 aa).

Basic and acidic residues predominate over residues 1 to 16 (MSKRESSKYKIDRRMG). Residues 1–46 (MSKRESSKYKIDRRMGENIWGRPKSPVNRREYGPGQHGQRRKGKLS) are disordered. The S4 RNA-binding domain maps to 94–157 (SRLDAIVYRA…KQLVTVLEAV (64 aa)).

The protein belongs to the universal ribosomal protein uS4 family. In terms of assembly, part of the 30S ribosomal subunit. Contacts protein S5. The interaction surface between S4 and S5 is involved in control of translational fidelity.

One of the primary rRNA binding proteins, it binds directly to 16S rRNA where it nucleates assembly of the body of the 30S subunit. Functionally, with S5 and S12 plays an important role in translational accuracy. In Rhizobium etli (strain CIAT 652), this protein is Small ribosomal subunit protein uS4.